We begin with the raw amino-acid sequence, 102 residues long: Small ribosomal subunit protein uS10 (102 aa).

Belongs to the universal ribosomal protein uS10 family. In terms of assembly, part of the 30S ribosomal subunit.

In terms of biological role, involved in the binding of tRNA to the ribosomes. This is Small ribosomal subunit protein uS10 from Staphylococcus aureus (strain Mu3 / ATCC 700698).